The chain runs to 453 residues: Bifunctional protein GlmU (453 aa).

The segment at 1–225 (MNIVILAAGT…EWETLGVNSK (225 aa)) is pyrophosphorylase. Residues 6–9 (LAAG), lysine 20, glutamine 71, 76–77 (GT), 98–100 (YGD), glycine 135, glutamate 150, asparagine 165, and asparagine 223 contribute to the UDP-N-acetyl-alpha-D-glucosamine site. Position 100 (aspartate 100) interacts with Mg(2+). Asparagine 223 provides a ligand contact to Mg(2+). The segment at 226–246 (QQLAELERIHQRNVADALLVA) is linker. The tract at residues 247 to 453 (GVTLADPARL…GYVRPTKKKS (207 aa)) is N-acetyltransferase. UDP-N-acetyl-alpha-D-glucosamine-binding residues include arginine 329 and lysine 347. Histidine 359 acts as the Proton acceptor in catalysis. UDP-N-acetyl-alpha-D-glucosamine contacts are provided by tyrosine 362 and asparagine 373. Acetyl-CoA-binding positions include alanine 376, 382 to 383 (NY), serine 401, and alanine 419.

It in the N-terminal section; belongs to the N-acetylglucosamine-1-phosphate uridyltransferase family. This sequence in the C-terminal section; belongs to the transferase hexapeptide repeat family. As to quaternary structure, homotrimer. Mg(2+) is required as a cofactor.

It is found in the cytoplasm. The enzyme catalyses alpha-D-glucosamine 1-phosphate + acetyl-CoA = N-acetyl-alpha-D-glucosamine 1-phosphate + CoA + H(+). It carries out the reaction N-acetyl-alpha-D-glucosamine 1-phosphate + UTP + H(+) = UDP-N-acetyl-alpha-D-glucosamine + diphosphate. It participates in nucleotide-sugar biosynthesis; UDP-N-acetyl-alpha-D-glucosamine biosynthesis; N-acetyl-alpha-D-glucosamine 1-phosphate from alpha-D-glucosamine 6-phosphate (route II): step 2/2. It functions in the pathway nucleotide-sugar biosynthesis; UDP-N-acetyl-alpha-D-glucosamine biosynthesis; UDP-N-acetyl-alpha-D-glucosamine from N-acetyl-alpha-D-glucosamine 1-phosphate: step 1/1. The protein operates within bacterial outer membrane biogenesis; LPS lipid A biosynthesis. Its function is as follows. Catalyzes the last two sequential reactions in the de novo biosynthetic pathway for UDP-N-acetylglucosamine (UDP-GlcNAc). The C-terminal domain catalyzes the transfer of acetyl group from acetyl coenzyme A to glucosamine-1-phosphate (GlcN-1-P) to produce N-acetylglucosamine-1-phosphate (GlcNAc-1-P), which is converted into UDP-GlcNAc by the transfer of uridine 5-monophosphate (from uridine 5-triphosphate), a reaction catalyzed by the N-terminal domain. The sequence is that of Bifunctional protein GlmU from Paraburkholderia xenovorans (strain LB400).